Here is a 729-residue protein sequence, read N- to C-terminus: Phosphoribosylformylglycinamidine synthase subunit PurL (729 aa).

His-42 is a catalytic residue. ATP-binding residues include Tyr-45 and Lys-84. Residue Glu-86 participates in Mg(2+) binding. Substrate-binding positions include 87–90 (SHNH) and Arg-109. Residue His-88 is the Proton acceptor of the active site. Mg(2+) is bound at residue Asp-110. Gln-238 provides a ligand contact to substrate. Asp-266 serves as a coordination point for Mg(2+). Residue 310–312 (ESQ) participates in substrate binding. Residues Asp-492 and Gly-529 each coordinate ATP. Asn-530 lines the Mg(2+) pocket. Ser-532 contacts substrate.

Belongs to the FGAMS family. Monomer. Part of the FGAM synthase complex composed of 1 PurL, 1 PurQ and 2 PurS subunits.

The protein localises to the cytoplasm. It catalyses the reaction N(2)-formyl-N(1)-(5-phospho-beta-D-ribosyl)glycinamide + L-glutamine + ATP + H2O = 2-formamido-N(1)-(5-O-phospho-beta-D-ribosyl)acetamidine + L-glutamate + ADP + phosphate + H(+). It functions in the pathway purine metabolism; IMP biosynthesis via de novo pathway; 5-amino-1-(5-phospho-D-ribosyl)imidazole from N(2)-formyl-N(1)-(5-phospho-D-ribosyl)glycinamide: step 1/2. Functionally, part of the phosphoribosylformylglycinamidine synthase complex involved in the purines biosynthetic pathway. Catalyzes the ATP-dependent conversion of formylglycinamide ribonucleotide (FGAR) and glutamine to yield formylglycinamidine ribonucleotide (FGAM) and glutamate. The FGAM synthase complex is composed of three subunits. PurQ produces an ammonia molecule by converting glutamine to glutamate. PurL transfers the ammonia molecule to FGAR to form FGAM in an ATP-dependent manner. PurS interacts with PurQ and PurL and is thought to assist in the transfer of the ammonia molecule from PurQ to PurL. This chain is Phosphoribosylformylglycinamidine synthase subunit PurL, found in Campylobacter concisus (strain 13826).